Reading from the N-terminus, the 210-residue chain is Glutathione S-transferase-like protein FUS3 (210 aa).

Residues 1–74 (MPNARVFKIL…YVAQSGPQAS (74 aa)) form the GST N-terminal domain. Residues 80–206 (DAMSSAKIRQ…GKPNFIEKRR (127 aa)) enclose the GST C-terminal domain.

This sequence belongs to the GST superfamily.

Glutathione S-transferase-like protein; part of the gene cluster that mediates the biosynthesis of the mycotoxin fusarin C. Within the cluster, FUS1, FUS2, FUS8 and FUS9 are sufficient for fusarin production. The other FUS cluster members are not essential for fusarin C biosynthesis. The protein is Glutathione S-transferase-like protein FUS3 of Gibberella fujikuroi (strain CBS 195.34 / IMI 58289 / NRRL A-6831) (Bakanae and foot rot disease fungus).